Reading from the N-terminus, the 290-residue chain is Pyridoxal 5'-phosphate synthase subunit PdxS (290 aa).

Position 22 (Asp22) interacts with D-ribose 5-phosphate. Lys79 functions as the Schiff-base intermediate with D-ribose 5-phosphate in the catalytic mechanism. Gly151 provides a ligand contact to D-ribose 5-phosphate. Arg163 contacts D-glyceraldehyde 3-phosphate. D-ribose 5-phosphate-binding positions include Gly212 and 233-234 (GS).

Belongs to the PdxS/SNZ family. In terms of assembly, in the presence of PdxT, forms a dodecamer of heterodimers.

The catalysed reaction is aldehydo-D-ribose 5-phosphate + D-glyceraldehyde 3-phosphate + L-glutamine = pyridoxal 5'-phosphate + L-glutamate + phosphate + 3 H2O + H(+). It participates in cofactor biosynthesis; pyridoxal 5'-phosphate biosynthesis. Catalyzes the formation of pyridoxal 5'-phosphate from ribose 5-phosphate (RBP), glyceraldehyde 3-phosphate (G3P) and ammonia. The ammonia is provided by the PdxT subunit. Can also use ribulose 5-phosphate and dihydroxyacetone phosphate as substrates, resulting from enzyme-catalyzed isomerization of RBP and G3P, respectively. This chain is Pyridoxal 5'-phosphate synthase subunit PdxS, found in Clostridium botulinum (strain Loch Maree / Type A3).